Reading from the N-terminus, the 398-residue chain is Acetate kinase (398 aa).

Residue Asn-10 participates in Mg(2+) binding. Lys-17 contributes to the ATP binding site. Substrate is bound at residue Arg-91. The active-site Proton donor/acceptor is Asp-148. ATP is bound by residues 208 to 212 (HLGNG), 283 to 285 (DCR), and 331 to 335 (GIGEN). Position 385 (Glu-385) interacts with Mg(2+).

The protein belongs to the acetokinase family. Homodimer. Requires Mg(2+) as cofactor. Mn(2+) is required as a cofactor.

It is found in the cytoplasm. It carries out the reaction acetate + ATP = acetyl phosphate + ADP. Its pathway is metabolic intermediate biosynthesis; acetyl-CoA biosynthesis; acetyl-CoA from acetate: step 1/2. Its function is as follows. Catalyzes the formation of acetyl phosphate from acetate and ATP. Can also catalyze the reverse reaction. This chain is Acetate kinase, found in Shewanella woodyi (strain ATCC 51908 / MS32).